Reading from the N-terminus, the 279-residue chain is MAPTKKKTSRKPKNRCVKNEKLASFIKDFDSQVKIITEELKASVVNILKEVDSQYNIEIIKLPMAIREMCWLDYIAKGGSQKALEAAATVKVDMEEITSTVTKTPFKLDKKVKKGKCKSDETLEPNPLQSVIRTKTKAKVAAKKPSTARKTRASTANLTNTSKRTSKRGRATPSASKQIETSLLGYTPAATPRIDTSIFKTPALRTPCLQEPVYTFSANGSPLAGMDELFINVPAGDGKNIRLLASEVDSLDINRLDNQAFENIKLLSSQLQRFCKKLK.

Basic residues predominate over residues 135 to 152 (KTKAKVAAKKPSTARKTR). A disordered region spans residues 135-180 (KTKAKVAAKKPSTARKTRASTANLTNTSKRTSKRGRATPSASKQIE). The span at 153–163 (ASTANLTNTSK) shows a compositional bias: polar residues.

The protein belongs to the borealin family. As to quaternary structure, component of the CPC at least composed of survivin/birc5, incenp, cdca8/borealin and/or cdca9/dasra-A, and aurkb/aurora-B. Interacts with incenp (via N-terminus).

It localises to the nucleus. Its subcellular location is the chromosome. The protein localises to the centromere. It is found in the cytoplasm. The protein resides in the cytoskeleton. It localises to the spindle. In terms of biological role, component of the chromosomal passenger complex (CPC), a complex that acts as a key regulator of mitosis. The CPC complex has essential functions at the centromere in ensuring correct chromosome alignment and segregation and is required for chromatin-induced microtubule stabilization and spindle assembly. Contributes to CPC function by facilitating loading of the CPC onto chromosomes. The protein is Borealin (cdca8) of Xenopus tropicalis (Western clawed frog).